Here is a 184-residue protein sequence, read N- to C-terminus: NADH-quinone oxidoreductase subunit B (184 aa).

Residues C63, C64, C128, and C158 each coordinate [4Fe-4S] cluster.

Belongs to the complex I 20 kDa subunit family. In terms of assembly, NDH-1 is composed of 14 different subunits. Subunits NuoB, C, D, E, F, and G constitute the peripheral sector of the complex. [4Fe-4S] cluster is required as a cofactor.

The protein localises to the cell inner membrane. It catalyses the reaction a quinone + NADH + 5 H(+)(in) = a quinol + NAD(+) + 4 H(+)(out). NDH-1 shuttles electrons from NADH, via FMN and iron-sulfur (Fe-S) centers, to quinones in the respiratory chain. The immediate electron acceptor for the enzyme in this species is believed to be ubiquinone. Couples the redox reaction to proton translocation (for every two electrons transferred, four hydrogen ions are translocated across the cytoplasmic membrane), and thus conserves the redox energy in a proton gradient. This chain is NADH-quinone oxidoreductase subunit B, found in Xanthomonas axonopodis pv. citri (strain 306).